The primary structure comprises 550 residues: Solute carrier family 22 member 11 (550 aa).

At 1-10 the chain is on the cytoplasmic side; that stretch reads MAFSKLLEQA. A helical membrane pass occupies residues 11–31; that stretch reads GGVGLFQTLQVLTFILPCLMI. Residues 32–142 lie on the Extracellular side of the membrane; sequence PSQMLLENFS…DLVCSSQGLK (111 aa). N-linked (GlcNAc...) asparagine glycans are attached at residues asparagine 39, asparagine 56, and asparagine 99. Residues 143-163 form a helical membrane-spanning segment; the sequence is PLSQSIFMSGILVGSFIWGLL. The Cytoplasmic portion of the chain corresponds to 164–174; it reads SYRFGRKPMLS. A helical membrane pass occupies residues 175 to 195; that stretch reads WCCLQLAVAGTSTIFAPTFVI. Topologically, residues 196 to 200 are extracellular; that stretch reads YCGLR. The chain crosses the membrane as a helical span at residues 201–221; sequence FVAAFGMAGIFLSSLTLMVEW. The Cytoplasmic segment spans residues 222–231; that stretch reads TTTSRRAVTM. A helical membrane pass occupies residues 232-252; the sequence is TVVGCAFSAGQAALGGLAFAL. Topologically, residues 253–256 are extracellular; sequence RDWR. Residues 257–277 form a helical membrane-spanning segment; that stretch reads TLQLAASVPFFAISLISWWLP. Topologically, residues 278–346 are cytoplasmic; sequence ESARWLIIKG…FCVPVLRWRS (69 aa). The chain crosses the membrane as a helical span at residues 347–367; sequence CAMLVVNFSLLISYYGLVFDL. At 368 to 378 the chain is on the extracellular side; sequence QSLGRDIFLLQ. Residues 379–399 traverse the membrane as a helical segment; sequence ALFGAVDFLGRATTALLLSFL. The Cytoplasmic segment spans residues 400–402; sequence GRR. Residues 403–423 traverse the membrane as a helical segment; the sequence is TIQAGSQAMAGLAILANMLVP. Topologically, residues 424 to 430 are extracellular; the sequence is QDLQTLR. The chain crosses the membrane as a helical span at residues 431 to 451; sequence VVFAVLGKGCFGISLTCLTIY. At 452 to 463 the chain is on the cytoplasmic side; sequence KAELFPTPVRMT. A helical membrane pass occupies residues 464–484; that stretch reads ADGILHTVGRLGAMMGPLILM. The Extracellular portion of the chain corresponds to 485–490; sequence SRQALP. Residues 491–511 form a helical membrane-spanning segment; the sequence is LLPPLLYGVISIASSLVVLFF. Topologically, residues 512-550 are cytoplasmic; sequence LPETQGLPLPDTIQDLESQKSTAAQGNRQEAVTVESTSL. The segment at 531–550 is disordered; the sequence is KSTAAQGNRQEAVTVESTSL.

It belongs to the major facilitator (TC 2.A.1) superfamily. Organic cation transporter (TC 2.A.1.19) family. In terms of processing, N-glycosylated. Contains several complex-type N-glycans. In terms of tissue distribution, expressed in placental trophoblasts, syncytiotrophoblast and cytotrophoblast. Also located in the proximal tubules in kidneys.

It localises to the cell membrane. The protein resides in the apical cell membrane. Its subcellular location is the basal cell membrane. It catalyses the reaction estrone 3-sulfate(out) + glutarate(in) = estrone 3-sulfate(in) + glutarate(out). It carries out the reaction dehydroepiandrosterone 3-sulfate(out) = dehydroepiandrosterone 3-sulfate(in). The enzyme catalyses prostaglandin F2alpha(out) = prostaglandin F2alpha(in). The catalysed reaction is prostaglandin E2(out) = prostaglandin E2(in). In terms of biological role, antiporter that mediates the transport of conjugated steroids and other specific organic anions at the basal membrane of syncytiotrophoblast and at the apical membrane of proximal tubule epithelial cells, in exchange for anionic compounds. May be responsible for placental absorption of fetal-derived steroid sulfates such as estrone sulfate (E1S) and the steroid hormone precursor dehydroepiandrosterone sulfate (DHEA-S), as well as clearing waste products and xenobiotics from the fetus. Maybe also be involved in placental urate homeostasis. Facilitates the renal reabsorption of organic anions such as urate and derived steroid sulfates. Organic anion glutarate acts as conteranion for E1S renal uptake. Possible transport mode may also include DHEA-S/E1S exchange. Also interacts with inorganic anions such as chloride and hydroxyl ions, therefore possible transport modes may include E1S/Cl(-), E1S/OH(-), urate/Cl(-) and urate/OH(-). Also mediates the transport of prostaglandin E2 (PGE2) and prostaglandin F2-alpha (PGF2-alpha) and may be involved in their renal excretion. Also able to uptake anionic drugs, diuretics, bile salts and ochratoxin A. Mediates the unidirectional efflux of glutamate and aspartate. Glutamate efflux down its transmembrane gradient may drive SLC22A11/OAT4-mediated placental uptake of E1S. The sequence is that of Solute carrier family 22 member 11 from Homo sapiens (Human).